A 519-amino-acid chain; its full sequence is Cytosol aminopeptidase (519 aa).

S42 bears the Phosphoserine mark. N6-succinyllysine is present on K45. The residue at position 54 (S54) is a Phosphoserine. K61 and K103 each carry N6-succinyllysine. Phosphoserine occurs at positions 180 and 194. Zn(2+) contacts are provided by L202 and M203. The residue at position 221 (K221) is an N6-acetyllysine; alternate. N6-succinyllysine; alternate is present on K221. S238 carries the phosphoserine modification. 2 residues coordinate Zn(2+): K282 and D287. Substrate is bound by residues K282, D287, S292, and K294. D287 contributes to the Mg(2+) binding site. K294 is a catalytic residue. R303, D305, D364, and E366 together coordinate Zn(2+). Positions 305 and 364 each coordinate substrate. 2 residues coordinate Mg(2+): D364 and E366. R368 is a catalytic residue. K455 carries the N6-acetyllysine; alternate modification. The residue at position 455 (K455) is an N6-succinyllysine; alternate. At K476 the chain carries N6-succinyllysine. At K489 the chain carries N6-acetyllysine; alternate. An N6-succinyllysine; alternate modification is found at K489.

Belongs to the peptidase M17 family. In terms of assembly, homohexamer. Zn(2+) serves as cofactor. Requires Mn(2+) as cofactor.

It localises to the cytoplasm. The enzyme catalyses Release of an N-terminal amino acid, Xaa-|-Yaa-, in which Xaa is preferably Leu, but may be other amino acids including Pro although not Arg or Lys, and Yaa may be Pro. Amino acid amides and methyl esters are also readily hydrolyzed, but rates on arylamides are exceedingly low.. It carries out the reaction an S-substituted L-cysteinylglycine + H2O = an S-substituted L-cysteine + glycine. The catalysed reaction is L-cysteinylglycine + H2O = L-cysteine + glycine. It catalyses the reaction S-benzyl-L-cysteinylglycine + H2O = S-benzyl-L-cysteine + glycine. The enzyme catalyses Release of N-terminal proline from a peptide.. With respect to regulation, bimane-S-cysteinylglycine-hydrolyzing activity is inhibited by o-phenanthroline or bestatin, and is activated by the addition of zinc chloride. Its function is as follows. Cytosolic metallopeptidase that catalyzes the removal of unsubstituted N-terminal hydrophobic amino acids from various peptides. The presence of Zn(2+) ions is essential for the peptidase activity, and the association with other cofactors can modulate the substrate spectificity of the enzyme. For instance, in the presence of Mn(2+), it displays a specific Cys-Gly hydrolyzing activity of Cys-Gly-S-conjugates. Involved in the metabolism of glutathione and in the degradation of glutathione S-conjugates, which may play a role in the control of the cell redox status. This chain is Cytosol aminopeptidase, found in Rattus norvegicus (Rat).